Here is a 208-residue protein sequence, read N- to C-terminus: Protein GrpE (208 aa).

Residues 1–12 (MTNKDESVEKNT) are compositionally biased toward basic and acidic residues. The interval 1–59 (MTNKDESVEKNTESTVEETNIKQNIDDSVEQAEESKGHLQDEAIEETSDENVIEEIDPK) is disordered. Residues 13 to 23 (ESTVEETNIKQ) show a composition bias toward polar residues. The segment covering 42-55 (EAIEETSDENVIEE) has biased composition (acidic residues).

The protein belongs to the GrpE family. In terms of assembly, homodimer.

It localises to the cytoplasm. Its function is as follows. Participates actively in the response to hyperosmotic and heat shock by preventing the aggregation of stress-denatured proteins, in association with DnaK and GrpE. It is the nucleotide exchange factor for DnaK and may function as a thermosensor. Unfolded proteins bind initially to DnaJ; upon interaction with the DnaJ-bound protein, DnaK hydrolyzes its bound ATP, resulting in the formation of a stable complex. GrpE releases ADP from DnaK; ATP binding to DnaK triggers the release of the substrate protein, thus completing the reaction cycle. Several rounds of ATP-dependent interactions between DnaJ, DnaK and GrpE are required for fully efficient folding. The polypeptide is Protein GrpE (Staphylococcus aureus (strain Mu3 / ATCC 700698)).